The chain runs to 213 residues: Small ribosomal subunit protein uS7 (213 aa).

This sequence belongs to the universal ribosomal protein uS7 family. In terms of assembly, component of the small ribosomal subunit (SSU). Mature N.crassa ribosomes consist of a small (40S) and a large (60S) subunit. The 40S small subunit contains 1 molecule of ribosomal RNA (18S rRNA) and at least 32 different proteins. The large 60S subunit contains 3 rRNA molecules (26S, 5.8S and 5S rRNA) and at least 42 different proteins.

It localises to the cytoplasm. In terms of biological role, component of the ribosome, a large ribonucleoprotein complex responsible for the synthesis of proteins in the cell. The small ribosomal subunit (SSU) binds messenger RNAs (mRNAs) and translates the encoded message by selecting cognate aminoacyl-transfer RNA (tRNA) molecules. The large subunit (LSU) contains the ribosomal catalytic site termed the peptidyl transferase center (PTC), which catalyzes the formation of peptide bonds, thereby polymerizing the amino acids delivered by tRNAs into a polypeptide chain. The nascent polypeptides leave the ribosome through a tunnel in the LSU and interact with protein factors that function in enzymatic processing, targeting, and the membrane insertion of nascent chains at the exit of the ribosomal tunnel. The sequence is that of Small ribosomal subunit protein uS7 (rps-5) from Neurospora crassa (strain ATCC 24698 / 74-OR23-1A / CBS 708.71 / DSM 1257 / FGSC 987).